The chain runs to 175 residues: Isopentenyl-diphosphate Delta-isomerase (175 aa).

Residues histidine 22 and histidine 29 each coordinate Mn(2+). The Nudix hydrolase domain maps to 27–160 (KLHRAFSVLL…PAAYTPWLAE (134 aa)). Cysteine 64 is a catalytic residue. Cysteine 64 is a binding site for Mg(2+). Position 66 (histidine 66) interacts with Mn(2+). Residue glutamate 84 participates in Mg(2+) binding. Mn(2+)-binding residues include glutamate 110 and glutamate 112. Residue glutamate 112 is part of the active site.

The protein belongs to the IPP isomerase type 1 family. The cofactor is Mg(2+). It depends on Mn(2+) as a cofactor.

The protein localises to the cytoplasm. It carries out the reaction isopentenyl diphosphate = dimethylallyl diphosphate. It functions in the pathway isoprenoid biosynthesis; dimethylallyl diphosphate biosynthesis; dimethylallyl diphosphate from isopentenyl diphosphate: step 1/1. Functionally, catalyzes the 1,3-allylic rearrangement of the homoallylic substrate isopentenyl (IPP) to its highly electrophilic allylic isomer, dimethylallyl diphosphate (DMAPP). This is Isopentenyl-diphosphate Delta-isomerase from Nocardia farcinica (strain IFM 10152).